A 141-amino-acid polypeptide reads, in one-letter code: Large ribosomal subunit protein uL11 (141 aa).

It belongs to the universal ribosomal protein uL11 family. As to quaternary structure, part of the ribosomal stalk of the 50S ribosomal subunit. Interacts with L10 and the large rRNA to form the base of the stalk. L10 forms an elongated spine to which L12 dimers bind in a sequential fashion forming a multimeric L10(L12)X complex. In terms of processing, one or more lysine residues are methylated.

In terms of biological role, forms part of the ribosomal stalk which helps the ribosome interact with GTP-bound translation factors. The polypeptide is Large ribosomal subunit protein uL11 (Campylobacter jejuni subsp. jejuni serotype O:6 (strain 81116 / NCTC 11828)).